A 213-amino-acid polypeptide reads, in one-letter code: Skin granule protein (213 aa).

The first 26 residues, 1–26, serve as a signal peptide directing secretion; the sequence is METMYHRFLCIPFLLILGLAQGQSKG. 3 consecutive repeat copies span residues 27-48, 49-70, and 71-92. The interval 27–104 is 4 X 22 AA approximate tandem repeats; that stretch reads LQTVTTFRTG…PIATFQTGVQ (78 aa). A 4; truncated repeat occupies 93 to 104; sequence LQPIATFQTGVQ. Positions 162–213 are disordered; sequence WHGGRNGHKMKKLGKKKHHKNRHGGKNHHKMKKIGKHHGGGRKFGKKHRHHK. Residues 166–213 show a composition bias toward basic residues; it reads RNGHKMKKLGKKKHHKNRHGGKNHHKMKKIGKHHGGGRKFGKKHRHHK.

The protein resides in the secreted. This Xenopus laevis (African clawed frog) protein is Skin granule protein (sgp).